Consider the following 275-residue polypeptide: uncharacterized protein (275 aa).

Residues 20–22, 41–42, 80–81, and Asn-107 each bind NAD(+); these read RGQ, DI, and DV. Ser-160 contributes to the substrate binding site. The active-site Proton acceptor is the Tyr-173. NAD(+) is bound by residues Lys-177 and 206-208; that span reads VET.

Belongs to the short-chain dehydrogenases/reductases (SDR) family.

This is an uncharacterized protein from Mycolicibacterium paratuberculosis (strain ATCC BAA-968 / K-10) (Mycobacterium paratuberculosis).